Consider the following 432-residue polypeptide: Acyl-coenzyme A thioesterase 3 (432 aa).

Residues Ser243, Asp337, and His371 each act as charge relay system in the active site. The short motif at 430 to 432 (AKL) is the Microbody targeting signal element.

This sequence belongs to the C/M/P thioester hydrolase family. As to expression, widely expressed. Highly expressed in the kidney, expressed at low level in the liver. Isoform 2 is expressed in the kidney, but not in the liver. Isoform 1 is liver-specific. Highly expressed in kidney (at protein level).

The protein resides in the peroxisome. It carries out the reaction hexadecanoyl-CoA + H2O = hexadecanoate + CoA + H(+). The catalysed reaction is decanoyl-CoA + H2O = decanoate + CoA + H(+). It catalyses the reaction dodecanoyl-CoA + H2O = dodecanoate + CoA + H(+). The enzyme catalyses tetradecanoyl-CoA + H2O = tetradecanoate + CoA + H(+). It carries out the reaction octadecanoyl-CoA + H2O = octadecanoate + CoA + H(+). The catalysed reaction is eicosanoyl-CoA + H2O = eicosanoate + CoA + H(+). It catalyses the reaction (9Z)-octadecenoyl-CoA + H2O = (9Z)-octadecenoate + CoA + H(+). The enzyme catalyses (9Z,12Z)-octadecadienoyl-CoA + H2O = (9Z,12Z)-octadecadienoate + CoA + H(+). It carries out the reaction (5Z,8Z,11Z,14Z)-eicosatetraenoyl-CoA + H2O = (5Z,8Z,11Z,14Z)-eicosatetraenoate + CoA + H(+). The catalysed reaction is tetracosanoyl-CoA + H2O = tetracosanoate + CoA + H(+). It catalyses the reaction hexacosanoyl-CoA + H2O = hexacosanoate + CoA + H(+). The enzyme catalyses docosanoyl-CoA + H2O = docosanoate + CoA + H(+). It carries out the reaction (9Z)-hexadecenoyl-CoA + H2O = (9Z)-hexadecenoate + CoA + H(+). Its pathway is lipid metabolism; fatty acid metabolism. Its function is as follows. Catalyzes the hydrolysis of acyl-CoAs into free fatty acids and coenzyme A (CoASH), regulating their respective intracellular levels. Mainly active on long-chain acyl-CoAs. May have a function in termination of beta-oxidation of fatty acids. This chain is Acyl-coenzyme A thioesterase 3 (Acot3), found in Mus musculus (Mouse).